The sequence spans 303 residues: Pseudouridine-5'-phosphate glycosidase (303 aa).

The active-site Proton donor is Glu-24. Substrate is bound by residues Lys-85 and Val-105. A Mn(2+)-binding site is contributed by Asp-137. Residue 139-141 (SAD) coordinates substrate. Lys-158 serves as the catalytic Nucleophile.

Belongs to the pseudouridine-5'-phosphate glycosidase family. In terms of assembly, homotrimer. Mn(2+) serves as cofactor.

It carries out the reaction D-ribose 5-phosphate + uracil = psi-UMP + H2O. In terms of biological role, catalyzes the reversible cleavage of pseudouridine 5'-phosphate (PsiMP) to ribose 5-phosphate and uracil. Functions biologically in the cleavage direction, as part of a pseudouridine degradation pathway. The protein is Pseudouridine-5'-phosphate glycosidase of Herpetosiphon aurantiacus (strain ATCC 23779 / DSM 785 / 114-95).